Consider the following 253-residue polypeptide: Electron transfer flavoprotein subunit beta, mitochondrial (253 aa).

It belongs to the ETF beta-subunit/FixA family. Heterodimer of an alpha and a beta subunit. The cofactor is FAD. AMP serves as cofactor.

The protein localises to the mitochondrion matrix. The electron transfer flavoprotein serves as a specific electron acceptor for several dehydrogenases, including five acyl-CoA dehydrogenases, glutaryl-CoA and sarcosine dehydrogenase. It transfers the electrons to the main mitochondrial respiratory chain via ETF-ubiquinone oxidoreductase (ETF dehydrogenase). The chain is Electron transfer flavoprotein subunit beta, mitochondrial (ETFB) from Oryza sativa subsp. japonica (Rice).